Consider the following 465-residue polypeptide: ATP synthase subunit beta (465 aa).

Position 153–160 (glycine 153–threonine 160) interacts with ATP.

This sequence belongs to the ATPase alpha/beta chains family. In terms of assembly, F-type ATPases have 2 components, CF(1) - the catalytic core - and CF(0) - the membrane proton channel. CF(1) has five subunits: alpha(3), beta(3), gamma(1), delta(1), epsilon(1). CF(0) has three main subunits: a(1), b(2) and c(9-12). The alpha and beta chains form an alternating ring which encloses part of the gamma chain. CF(1) is attached to CF(0) by a central stalk formed by the gamma and epsilon chains, while a peripheral stalk is formed by the delta and b chains.

It localises to the cell membrane. It carries out the reaction ATP + H2O + 4 H(+)(in) = ADP + phosphate + 5 H(+)(out). Functionally, produces ATP from ADP in the presence of a proton gradient across the membrane. The catalytic sites are hosted primarily by the beta subunits. This is ATP synthase subunit beta from Clostridium perfringens (strain SM101 / Type A).